A 214-amino-acid polypeptide reads, in one-letter code: Small ribosomal subunit protein uS5 (214 aa).

The disordered stretch occupies residues 1 to 61 (MTDSSPQSNP…QERDSEWQER (61 aa)). The span at 9 to 29 (NPNAVPGAADVPAAAEGQQQQ) shows a compositional bias: low complexity. The span at 30 to 60 (EQRRGRGDRDGRRGDRRGGRRGQERDSEWQE) shows a compositional bias: basic and acidic residues. Residues 58 to 121 (WQERVVQIRR…ADGKKHLVKV (64 aa)) form the S5 DRBM domain.

Belongs to the universal ribosomal protein uS5 family. Part of the 30S ribosomal subunit. Contacts proteins S4 and S8.

In terms of biological role, with S4 and S12 plays an important role in translational accuracy. Located at the back of the 30S subunit body where it stabilizes the conformation of the head with respect to the body. The sequence is that of Small ribosomal subunit protein uS5 from Synechococcus sp. (strain CC9605).